Consider the following 230-residue polypeptide: Ribonuclease 3 (230 aa).

The region spanning 1–134 (MKQLEELLST…FLGALLLDKG (134 aa)) is the RNase III domain. Glu47 lines the Mg(2+) pocket. Asp51 is a catalytic residue. Asp120 and Glu123 together coordinate Mg(2+). Glu123 is an active-site residue. In terms of domain architecture, DRBM spans 160-229 (DYKTCLQEFL…AKNALAQLSE (70 aa)).

This sequence belongs to the ribonuclease III family. Homodimer. The cofactor is Mg(2+).

Its subcellular location is the cytoplasm. It carries out the reaction Endonucleolytic cleavage to 5'-phosphomonoester.. In terms of biological role, digests double-stranded RNA. Involved in the processing of primary rRNA transcript to yield the immediate precursors to the large and small rRNAs (23S and 16S). Processes some mRNAs, and tRNAs when they are encoded in the rRNA operon. Processes pre-crRNA and tracrRNA of type II CRISPR loci if present in the organism. The chain is Ribonuclease 3 from Streptococcus pyogenes serotype M28 (strain MGAS6180).